Reading from the N-terminus, the 655-residue chain is p-hydroxybenzoic acid efflux pump subunit AaeB (655 aa).

The Periplasmic portion of the chain corresponds to 1–12; sequence MDIFSIANQHIR. Residues 13–33 traverse the membrane as a helical segment; that stretch reads FAVKLATAIVLALFVGFHFQL. The Cytoplasmic portion of the chain corresponds to 34–37; it reads ETPR. Residues 38-58 traverse the membrane as a helical segment; that stretch reads WAVLTAAIVAAGPAFAAGGEP. Residues 59 to 68 lie on the Periplasmic side of the membrane; that stretch reads YSGAIRYRGF. A helical membrane pass occupies residues 69–89; that stretch reads LRIIGTFIGCIAGLVIIIAMI. The Cytoplasmic segment spans residues 90 to 92; the sequence is RAP. The chain crosses the membrane as a helical span at residues 93–113; sequence LLMILVCCIWAGFCTWISSLV. Over 114-120 the chain is Periplasmic; that stretch reads RIENSYA. Residues 121–141 form a helical membrane-spanning segment; it reads WGLAGYTALIIVITIQPEPLL. Topologically, residues 142–151 are cytoplasmic; the sequence is TPQFAVERCS. A helical transmembrane segment spans residues 152-172; it reads EIVIGIVCAIMADLLFSPRSI. At 173–369 the chain is on the periplasmic side; that stretch reads KQEVDRELES…RTTLSCILGT (197 aa). A helical transmembrane segment spans residues 370–390; that stretch reads LFWLWTGWTSGSGAMVMIAVV. Residues 391–406 lie on the Cytoplasmic side of the membrane; that stretch reads TSLAMRLPNPRMVAID. Residues 407–427 form a helical membrane-spanning segment; sequence FIYGTLAALPLGLLYFLVIIP. The Periplasmic portion of the chain corresponds to 428-430; it reads NTQ. Residues 431–451 form a helical membrane-spanning segment; it reads QSMLLLCISLAVLGFFLGIEV. Residues 452–458 lie on the Cytoplasmic side of the membrane; sequence QKRRLGS. Residues 459–479 traverse the membrane as a helical segment; sequence MGALASTINIIVLDNPMTFHF. Residues 480 to 481 are Periplasmic-facing; that stretch reads SQ. A helical membrane pass occupies residues 482-502; it reads FLDSALGQIVGCVLAFTVILL. Topologically, residues 503–655 are cytoplasmic; it reads VRDKSRDRTG…HKYQHALTDS (153 aa).

Belongs to the aromatic acid exporter ArAE (TC 2.A.85) family.

The protein resides in the cell inner membrane. Functionally, forms an efflux pump with AaeA. Could function as a metabolic relief valve, allowing to eliminate certain compounds when they accumulate to high levels in the cell. The chain is p-hydroxybenzoic acid efflux pump subunit AaeB from Escherichia coli O157:H7.